Reading from the N-terminus, the 301-residue chain is Homoserine O-acetyltransferase (301 aa).

Cysteine 142 (acyl-thioester intermediate) is an active-site residue. Substrate contacts are provided by lysine 163 and serine 192. Residue histidine 235 is the Proton acceptor of the active site. Glutamate 237 is an active-site residue. Residue arginine 249 participates in substrate binding.

Belongs to the MetA family.

It is found in the cytoplasm. It carries out the reaction L-homoserine + acetyl-CoA = O-acetyl-L-homoserine + CoA. It functions in the pathway amino-acid biosynthesis; L-methionine biosynthesis via de novo pathway; O-acetyl-L-homoserine from L-homoserine: step 1/1. Functionally, transfers an acetyl group from acetyl-CoA to L-homoserine, forming acetyl-L-homoserine. This Bacillus cereus (strain ZK / E33L) protein is Homoserine O-acetyltransferase.